The primary structure comprises 337 residues: Glyceraldehyde-3-phosphate dehydrogenase 1 (337 aa).

NAD(+)-binding positions include 12-13 (RI), D34, and M79. D-glyceraldehyde 3-phosphate-binding positions include 151-153 (SCT), T182, 211-212 (TG), and R234. Residue C152 is the Nucleophile of the active site. NAD(+) is bound at residue N316.

This sequence belongs to the glyceraldehyde-3-phosphate dehydrogenase family. In terms of assembly, homotetramer.

The protein resides in the cytoplasm. The catalysed reaction is D-glyceraldehyde 3-phosphate + phosphate + NAD(+) = (2R)-3-phospho-glyceroyl phosphate + NADH + H(+). Its pathway is carbohydrate degradation; glycolysis; pyruvate from D-glyceraldehyde 3-phosphate: step 1/5. The chain is Glyceraldehyde-3-phosphate dehydrogenase 1 (GAP1) from Giardia intestinalis (Giardia lamblia).